A 748-amino-acid polypeptide reads, in one-letter code: Formate acetyltransferase (748 aa).

The PFL domain occupies 5 to 618 (NNHTNAWQGF…KTGNTPDGRK (614 aa)). Residue C412 is the S-acetylcysteine intermediate of the active site. C413 (cysteine radical intermediate) is an active-site residue. The region spanning 625–748 (PGANPMHGRD…VISRTFHESM (124 aa)) is the Glycine radical domain. G723 carries the glycine radical modification.

It belongs to the glycyl radical enzyme (GRE) family. PFL subfamily. As to quaternary structure, homodimer.

It localises to the cytoplasm. The catalysed reaction is formate + acetyl-CoA = pyruvate + CoA. Its pathway is fermentation; pyruvate fermentation; formate from pyruvate: step 1/1. Catalyzes the conversion of pyruvate to formate and acetyl-CoA. The protein is Formate acetyltransferase (pflB) of Staphylococcus epidermidis (strain ATCC 12228 / FDA PCI 1200).